We begin with the raw amino-acid sequence, 226 residues long: Ribosome-recycling factor, mitochondrial (226 aa).

The protein belongs to the RRF family.

It localises to the mitochondrion. Its function is as follows. Necessary for protein synthesis in mitochondria. Functions as a ribosome recycling factor in mitochondria. This chain is Ribosome-recycling factor, mitochondrial (RRF1), found in Eremothecium gossypii (strain ATCC 10895 / CBS 109.51 / FGSC 9923 / NRRL Y-1056) (Yeast).